Reading from the N-terminus, the 409-residue chain is Putative competence-damage inducible protein (409 aa).

It belongs to the CinA family.

This is Putative competence-damage inducible protein from Clostridium tetani (strain Massachusetts / E88).